A 512-amino-acid polypeptide reads, in one-letter code: MGLSLMLQGTASDVGKSVLVAGLCRIFVQDGYRCAPFKSQNMALNSGITINGEEMGRAQIFQAEAAGIEPDVRMNPVLLKPTSERKAQVVLMGKVACSMNAVEYHQYKPSLQQQICEVFHSLASEYDVIVLEGAGSPAEINLRDRDIVNMGMAEMVDAPVLLVADIDRGGVFAAIYGTLALLRPAEKARVKGVIINKFRGDISLLQPGIEQIEALTGVPVLGVMPWLDIDLEDEDGVALQTGKYDGATEKALDITVIRLPHIANFTDFNALAVQPDVRLRYVTQPSALQPSDLIILPGSKNTLGDLQWLRQNGLADALLTAHQAGVPVIGICGGYQMLGKRIIDGVESGIEQMDGLGLLDMETRFAHEKVTTRVNGNCLLALPGLLSECVEQPIRGYEIHMGSSLLGADATPFIDITERNGQSGGWCDGAVNREGSVMGSYIHGLFDSANFTRALLNALRQRKGLAAYQGEILDYTHYKQTQFDLLAKAMREHLDIERIYQCMKTHRQGSVP.

A GATase cobBQ-type domain is found at 251–451; it reads ALDITVIRLP…IHGLFDSANF (201 aa). The Nucleophile role is filled by Cys332. Residue His443 is part of the active site.

The protein belongs to the CobB/CobQ family. CobQ subfamily.

The protein operates within cofactor biosynthesis; adenosylcobalamin biosynthesis. Catalyzes amidations at positions B, D, E, and G on adenosylcobyrinic A,C-diamide. NH(2) groups are provided by glutamine, and one molecule of ATP is hydrogenolyzed for each amidation. The sequence is that of Cobyric acid synthase from Photorhabdus laumondii subsp. laumondii (strain DSM 15139 / CIP 105565 / TT01) (Photorhabdus luminescens subsp. laumondii).